The sequence spans 457 residues: Siroheme synthase (457 aa).

Positions 4–202 (LPIFCQLRDR…ANADEKAVNA (199 aa)) are precorrin-2 dehydrogenase /sirohydrochlorin ferrochelatase. NAD(+)-binding positions include 22-23 (DV) and 43-44 (LT). Ser-128 bears the Phosphoserine mark. The segment at 216-448 (GEVVLVGAGP…IIVGRVVALR (233 aa)) is uroporphyrinogen-III C-methyltransferase. Pro-225 lines the S-adenosyl-L-methionine pocket. Asp-248 serves as the catalytic Proton acceptor. Lys-270 acts as the Proton donor in catalysis. S-adenosyl-L-methionine-binding positions include 301-303 (GGD), Ile-306, 331-332 (TA), Met-382, Gly-411, and Ala-437.

The protein in the N-terminal section; belongs to the precorrin-2 dehydrogenase / sirohydrochlorin ferrochelatase family. It in the C-terminal section; belongs to the precorrin methyltransferase family. As to quaternary structure, homodimer.

The enzyme catalyses uroporphyrinogen III + 2 S-adenosyl-L-methionine = precorrin-2 + 2 S-adenosyl-L-homocysteine + H(+). It catalyses the reaction precorrin-2 + NAD(+) = sirohydrochlorin + NADH + 2 H(+). It carries out the reaction siroheme + 2 H(+) = sirohydrochlorin + Fe(2+). The protein operates within cofactor biosynthesis; adenosylcobalamin biosynthesis; precorrin-2 from uroporphyrinogen III: step 1/1. It functions in the pathway cofactor biosynthesis; adenosylcobalamin biosynthesis; sirohydrochlorin from precorrin-2: step 1/1. Its pathway is porphyrin-containing compound metabolism; siroheme biosynthesis; precorrin-2 from uroporphyrinogen III: step 1/1. It participates in porphyrin-containing compound metabolism; siroheme biosynthesis; siroheme from sirohydrochlorin: step 1/1. The protein operates within porphyrin-containing compound metabolism; siroheme biosynthesis; sirohydrochlorin from precorrin-2: step 1/1. In terms of biological role, multifunctional enzyme that catalyzes the SAM-dependent methylations of uroporphyrinogen III at position C-2 and C-7 to form precorrin-2 via precorrin-1. Then it catalyzes the NAD-dependent ring dehydrogenation of precorrin-2 to yield sirohydrochlorin. Finally, it catalyzes the ferrochelation of sirohydrochlorin to yield siroheme. The chain is Siroheme synthase from Salmonella typhimurium (strain LT2 / SGSC1412 / ATCC 700720).